Consider the following 180-residue polypeptide: Large ribosomal subunit protein uL5 (180 aa).

The protein belongs to the universal ribosomal protein uL5 family. As to quaternary structure, part of the 50S ribosomal subunit; part of the 5S rRNA/L5/L18/L25 subcomplex. Contacts the 5S rRNA and the P site tRNA. Forms a bridge to the 30S subunit in the 70S ribosome.

This is one of the proteins that bind and probably mediate the attachment of the 5S RNA into the large ribosomal subunit, where it forms part of the central protuberance. In the 70S ribosome it contacts protein S13 of the 30S subunit (bridge B1b), connecting the 2 subunits; this bridge is implicated in subunit movement. Contacts the P site tRNA; the 5S rRNA and some of its associated proteins might help stabilize positioning of ribosome-bound tRNAs. The chain is Large ribosomal subunit protein uL5 from Leuconostoc citreum (strain KM20).